Here is a 732-residue protein sequence, read N- to C-terminus: Elongation factor 2 (732 aa).

The 242-residue stretch at 19–260 (ERIRNIGIAA…MVVRHLPSPI (242 aa)) folds into the tr-type G domain. GTP contacts are provided by residues 28 to 35 (AHIDHGKT), 94 to 98 (DTPGH), and 148 to 151 (NKVD). Position 597 is a diphthamide (histidine 597).

The protein belongs to the TRAFAC class translation factor GTPase superfamily. Classic translation factor GTPase family. EF-G/EF-2 subfamily.

The protein resides in the cytoplasm. Catalyzes the GTP-dependent ribosomal translocation step during translation elongation. During this step, the ribosome changes from the pre-translocational (PRE) to the post-translocational (POST) state as the newly formed A-site-bound peptidyl-tRNA and P-site-bound deacylated tRNA move to the P and E sites, respectively. Catalyzes the coordinated movement of the two tRNA molecules, the mRNA and conformational changes in the ribosome. The polypeptide is Elongation factor 2 (fusA) (Pyrococcus horikoshii (strain ATCC 700860 / DSM 12428 / JCM 9974 / NBRC 100139 / OT-3)).